A 475-amino-acid chain; its full sequence is Ribulose bisphosphate carboxylase large chain (475 aa).

The propeptide occupies 1–2 (MS). Position 3 is an N-acetylproline (Pro-3). N6,N6,N6-trimethyllysine is present on Lys-14. Substrate contacts are provided by Asn-123 and Thr-173. Lys-175 functions as the Proton acceptor in the catalytic mechanism. Position 177 (Lys-177) interacts with substrate. Positions 201, 203, and 204 each coordinate Mg(2+). An N6-carboxylysine modification is found at Lys-201. Catalysis depends on His-294, which acts as the Proton acceptor. Positions 295, 327, and 379 each coordinate substrate.

Belongs to the RuBisCO large chain family. Type I subfamily. In terms of assembly, heterohexadecamer of 8 large chains and 8 small chains; disulfide-linked. The disulfide link is formed within the large subunit homodimers. Requires Mg(2+) as cofactor. The disulfide bond which can form in the large chain dimeric partners within the hexadecamer appears to be associated with oxidative stress and protein turnover.

Its subcellular location is the plastid. The protein localises to the chloroplast. The catalysed reaction is 2 (2R)-3-phosphoglycerate + 2 H(+) = D-ribulose 1,5-bisphosphate + CO2 + H2O. The enzyme catalyses D-ribulose 1,5-bisphosphate + O2 = 2-phosphoglycolate + (2R)-3-phosphoglycerate + 2 H(+). Its function is as follows. RuBisCO catalyzes two reactions: the carboxylation of D-ribulose 1,5-bisphosphate, the primary event in carbon dioxide fixation, as well as the oxidative fragmentation of the pentose substrate in the photorespiration process. Both reactions occur simultaneously and in competition at the same active site. This chain is Ribulose bisphosphate carboxylase large chain, found in Cryptomeria japonica (Japanese cedar).